The following is a 116-amino-acid chain: Large ribosomal subunit protein bL19 (116 aa).

It belongs to the bacterial ribosomal protein bL19 family.

This protein is located at the 30S-50S ribosomal subunit interface and may play a role in the structure and function of the aminoacyl-tRNA binding site. The sequence is that of Large ribosomal subunit protein bL19 from Pseudomonas fluorescens (strain Pf0-1).